A 337-amino-acid chain; its full sequence is tRNA N6-adenosine threonylcarbamoyltransferase (337 aa).

Positions 111 and 115 each coordinate Fe cation. Substrate is bound by residues 134–138 (LVSGG), aspartate 167, glycine 180, and asparagine 272. Fe cation is bound at residue aspartate 300.

It belongs to the KAE1 / TsaD family. It depends on Fe(2+) as a cofactor.

The protein resides in the cytoplasm. It catalyses the reaction L-threonylcarbamoyladenylate + adenosine(37) in tRNA = N(6)-L-threonylcarbamoyladenosine(37) in tRNA + AMP + H(+). In terms of biological role, required for the formation of a threonylcarbamoyl group on adenosine at position 37 (t(6)A37) in tRNAs that read codons beginning with adenine. Is involved in the transfer of the threonylcarbamoyl moiety of threonylcarbamoyl-AMP (TC-AMP) to the N6 group of A37, together with TsaE and TsaB. TsaD likely plays a direct catalytic role in this reaction. The protein is tRNA N6-adenosine threonylcarbamoyltransferase of Escherichia coli O127:H6 (strain E2348/69 / EPEC).